The sequence spans 357 residues: Alanine racemase, catabolic (357 aa).

The active-site Proton acceptor; specific for D-alanine is lysine 33. Lysine 33 bears the N6-(pyridoxal phosphate)lysine mark. An N6-carboxylysine modification is found at lysine 122. Arginine 129 is a binding site for substrate. Tyrosine 253 acts as the Proton acceptor; specific for L-alanine in catalysis. Methionine 301 is a substrate binding site.

Belongs to the alanine racemase family. In terms of assembly, homodimer. Requires pyridoxal 5'-phosphate as cofactor.

The catalysed reaction is L-alanine = D-alanine. Isomerizes L-alanine to D-alanine which is then oxidized to pyruvate by DadA. In Pseudomonas aeruginosa (strain ATCC 15692 / DSM 22644 / CIP 104116 / JCM 14847 / LMG 12228 / 1C / PRS 101 / PAO1), this protein is Alanine racemase, catabolic.